The following is a 410-amino-acid chain: Argininosuccinate synthase (410 aa).

An ATP-binding site is contributed by 6 to 14 (AYSGGLDTS). Tyr84 contributes to the L-citrulline binding site. Residue Gly114 coordinates ATP. Positions 116, 120, and 121 each coordinate L-aspartate. Asn120 is an L-citrulline binding site. L-citrulline contacts are provided by Arg124, Ser169, Ser178, Glu254, and Tyr266.

The protein belongs to the argininosuccinate synthase family. Type 1 subfamily. Homotetramer.

It is found in the cytoplasm. The catalysed reaction is L-citrulline + L-aspartate + ATP = 2-(N(omega)-L-arginino)succinate + AMP + diphosphate + H(+). It functions in the pathway amino-acid biosynthesis; L-arginine biosynthesis; L-arginine from L-ornithine and carbamoyl phosphate: step 2/3. In Pyrococcus furiosus (strain ATCC 43587 / DSM 3638 / JCM 8422 / Vc1), this protein is Argininosuccinate synthase.